The primary structure comprises 359 residues: 3-dehydroquinate synthase (359 aa).

NAD(+)-binding positions include 71–76 (DGEQYK), 105–109 (GVIGD), 129–130 (TT), lysine 142, lysine 151, and 169–172 (CLAT). Glutamate 184, histidine 247, and histidine 264 together coordinate Zn(2+).

This sequence belongs to the sugar phosphate cyclases superfamily. Dehydroquinate synthase family. Requires Co(2+) as cofactor. Zn(2+) serves as cofactor. It depends on NAD(+) as a cofactor.

It is found in the cytoplasm. The catalysed reaction is 7-phospho-2-dehydro-3-deoxy-D-arabino-heptonate = 3-dehydroquinate + phosphate. It functions in the pathway metabolic intermediate biosynthesis; chorismate biosynthesis; chorismate from D-erythrose 4-phosphate and phosphoenolpyruvate: step 2/7. In terms of biological role, catalyzes the conversion of 3-deoxy-D-arabino-heptulosonate 7-phosphate (DAHP) to dehydroquinate (DHQ). The chain is 3-dehydroquinate synthase from Baumannia cicadellinicola subsp. Homalodisca coagulata.